The sequence spans 65 residues: Large ribosomal subunit protein bL33m (65 aa).

The transit peptide at 1 to 8 (MFLSAVFF) directs the protein to the mitochondrion.

It belongs to the bacterial ribosomal protein bL33 family. As to quaternary structure, component of the mitochondrial large ribosomal subunit (mt-LSU). Mature mammalian 55S mitochondrial ribosomes consist of a small (28S) and a large (39S) subunit. The 28S small subunit contains a 12S ribosomal RNA (12S mt-rRNA) and 30 different proteins. The 39S large subunit contains a 16S rRNA (16S mt-rRNA), a copy of mitochondrial valine transfer RNA (mt-tRNA(Val)), which plays an integral structural role, and 52 different proteins.

The protein localises to the mitochondrion. In Homo sapiens (Human), this protein is Large ribosomal subunit protein bL33m (MRPL33).